Reading from the N-terminus, the 121-residue chain is Ribonuclease P protein component (121 aa).

Belongs to the RnpA family. Consists of a catalytic RNA component (M1 or rnpB) and a protein subunit.

It catalyses the reaction Endonucleolytic cleavage of RNA, removing 5'-extranucleotides from tRNA precursor.. RNaseP catalyzes the removal of the 5'-leader sequence from pre-tRNA to produce the mature 5'-terminus. It can also cleave other RNA substrates such as 4.5S RNA. The protein component plays an auxiliary but essential role in vivo by binding to the 5'-leader sequence and broadening the substrate specificity of the ribozyme. The chain is Ribonuclease P protein component from Bifidobacterium adolescentis (strain ATCC 15703 / DSM 20083 / NCTC 11814 / E194a).